The sequence spans 236 residues: Adenosine 5'-phosphosulfate reductase (236 aa).

Residues Cys-122, Cys-123, Cys-205, and Cys-208 each coordinate [4Fe-4S] cluster. Cys-231 serves as the catalytic Nucleophile; cysteine thiosulfonate intermediate.

It belongs to the PAPS reductase family. CysH subfamily. [4Fe-4S] cluster is required as a cofactor.

Its subcellular location is the cytoplasm. The enzyme catalyses [thioredoxin]-disulfide + sulfite + AMP + 2 H(+) = adenosine 5'-phosphosulfate + [thioredoxin]-dithiol. It functions in the pathway sulfur metabolism; hydrogen sulfide biosynthesis; sulfite from sulfate. Functionally, catalyzes the formation of sulfite from adenosine 5'-phosphosulfate (APS) using thioredoxin as an electron donor. This Mycolicibacterium smegmatis (strain ATCC 700084 / mc(2)155) (Mycobacterium smegmatis) protein is Adenosine 5'-phosphosulfate reductase.